A 291-amino-acid polypeptide reads, in one-letter code: Acetyl-coenzyme A carboxylase carboxyl transferase subunit beta (291 aa).

Positions 29–291 (IMTKCPQCKK…TGGEREWLEN (263 aa)) constitute a CoA carboxyltransferase N-terminal domain. Zn(2+)-binding residues include cysteine 33, cysteine 36, cysteine 52, and cysteine 55. Residues 33 to 55 (CPQCKKIMLTKELDKNLRVCMNC) form a C4-type zinc finger.

The protein belongs to the AccD/PCCB family. Acetyl-CoA carboxylase is a heterohexamer composed of biotin carboxyl carrier protein (AccB), biotin carboxylase (AccC) and two subunits each of ACCase subunit alpha (AccA) and ACCase subunit beta (AccD). It depends on Zn(2+) as a cofactor.

The protein resides in the cytoplasm. It catalyses the reaction N(6)-carboxybiotinyl-L-lysyl-[protein] + acetyl-CoA = N(6)-biotinyl-L-lysyl-[protein] + malonyl-CoA. Its pathway is lipid metabolism; malonyl-CoA biosynthesis; malonyl-CoA from acetyl-CoA: step 1/1. Component of the acetyl coenzyme A carboxylase (ACC) complex. Biotin carboxylase (BC) catalyzes the carboxylation of biotin on its carrier protein (BCCP) and then the CO(2) group is transferred by the transcarboxylase to acetyl-CoA to form malonyl-CoA. The chain is Acetyl-coenzyme A carboxylase carboxyl transferase subunit beta from Bacillus pumilus (strain SAFR-032).